We begin with the raw amino-acid sequence, 260 residues long: DNA repair protein RecO (260 aa).

It belongs to the RecO family.

Its function is as follows. Involved in DNA repair and RecF pathway recombination. The chain is DNA repair protein RecO from Streptococcus gordonii (strain Challis / ATCC 35105 / BCRC 15272 / CH1 / DL1 / V288).